Consider the following 211-residue polypeptide: Orotate phosphoribosyltransferase (211 aa).

Lysine 26 lines the 5-phospho-alpha-D-ribose 1-diphosphate pocket. Residue 34-35 participates in orotate binding; that stretch reads FF. 5-phospho-alpha-D-ribose 1-diphosphate contacts are provided by residues 72–73, arginine 98, lysine 99, lysine 102, histidine 104, and 123–131; these read YK and DDVITAGTA. Orotate-binding residues include threonine 127 and arginine 155.

Belongs to the purine/pyrimidine phosphoribosyltransferase family. PyrE subfamily. In terms of assembly, homodimer. The cofactor is Mg(2+).

It carries out the reaction orotidine 5'-phosphate + diphosphate = orotate + 5-phospho-alpha-D-ribose 1-diphosphate. It participates in pyrimidine metabolism; UMP biosynthesis via de novo pathway; UMP from orotate: step 1/2. In terms of biological role, catalyzes the transfer of a ribosyl phosphate group from 5-phosphoribose 1-diphosphate to orotate, leading to the formation of orotidine monophosphate (OMP). The chain is Orotate phosphoribosyltransferase from Legionella pneumophila (strain Lens).